The primary structure comprises 932 residues: Protein translocase subunit SecA (932 aa).

ATP contacts are provided by residues Q87, 105–109 (GEGKT), and D515. Zn(2+)-binding residues include C916, C918, C927, and H928.

This sequence belongs to the SecA family. As to quaternary structure, monomer and homodimer. Part of the essential Sec protein translocation apparatus which comprises SecA, SecYEG and auxiliary proteins SecDF-YajC and YidC. It depends on Zn(2+) as a cofactor.

The protein resides in the cell inner membrane. It localises to the cytoplasm. The enzyme catalyses ATP + H2O + cellular proteinSide 1 = ADP + phosphate + cellular proteinSide 2.. Functionally, part of the Sec protein translocase complex. Interacts with the SecYEG preprotein conducting channel. Has a central role in coupling the hydrolysis of ATP to the transfer of proteins into and across the cell membrane, serving both as a receptor for the preprotein-SecB complex and as an ATP-driven molecular motor driving the stepwise translocation of polypeptide chains across the membrane. In Burkholderia orbicola (strain MC0-3), this protein is Protein translocase subunit SecA.